The chain runs to 113 residues: Flagellar hook-basal body complex protein FliE (113 aa).

It belongs to the FliE family.

It is found in the bacterial flagellum basal body. The protein is Flagellar hook-basal body complex protein FliE of Rhizobium etli (strain CIAT 652).